We begin with the raw amino-acid sequence, 251 residues long: Small ribosomal subunit protein uS2 (251 aa).

The protein belongs to the universal ribosomal protein uS2 family.

The protein is Small ribosomal subunit protein uS2 of Chlorobium chlorochromatii (strain CaD3).